Here is a 157-residue protein sequence, read N- to C-terminus: Arginine repressor (157 aa).

Belongs to the ArgR family.

Its subcellular location is the cytoplasm. It functions in the pathway amino-acid biosynthesis; L-arginine biosynthesis [regulation]. In terms of biological role, regulates arginine biosynthesis genes. The chain is Arginine repressor from Bacteroides fragilis (strain ATCC 25285 / DSM 2151 / CCUG 4856 / JCM 11019 / LMG 10263 / NCTC 9343 / Onslow / VPI 2553 / EN-2).